A 510-amino-acid polypeptide reads, in one-letter code: NAD(P)H-quinone oxidoreductase subunit 2 A, chloroplastic (510 aa).

A run of 13 helical transmembrane segments spans residues 24–44, 57–77, 99–119, 124–144, 149–169, 183–203, 229–249, 295–315, 323–343, 354–374, 395–415, 418–438, and 484–504; these read LLLF…GLIL, TPWL…ALLF, IFQF…VEYI, MAIT…MFLC, LITI…LSGY, YLLM…WLYG, ISIA…PAPF, WHLL…LIAI, MLAY…IVGD, YMLF…LFGL, ALSS…AGFF, LYLF…IGLL, and MIVC…IIAI.

It belongs to the complex I subunit 2 family. In terms of assembly, NDH is composed of at least 16 different subunits, 5 of which are encoded in the nucleus.

It localises to the plastid. The protein localises to the chloroplast thylakoid membrane. The enzyme catalyses a plastoquinone + NADH + (n+1) H(+)(in) = a plastoquinol + NAD(+) + n H(+)(out). It catalyses the reaction a plastoquinone + NADPH + (n+1) H(+)(in) = a plastoquinol + NADP(+) + n H(+)(out). In terms of biological role, NDH shuttles electrons from NAD(P)H:plastoquinone, via FMN and iron-sulfur (Fe-S) centers, to quinones in the photosynthetic chain and possibly in a chloroplast respiratory chain. The immediate electron acceptor for the enzyme in this species is believed to be plastoquinone. Couples the redox reaction to proton translocation, and thus conserves the redox energy in a proton gradient. The sequence is that of NAD(P)H-quinone oxidoreductase subunit 2 A, chloroplastic from Nuphar advena (Common spatterdock).